We begin with the raw amino-acid sequence, 272 residues long: 1,4-dihydroxy-2-naphthoyl-CoA synthase (272 aa).

Substrate-binding positions include arginine 33, 72–76 (SGGDQ), tyrosine 84, 116–120 (YAIGG), threonine 142, serine 148, tyrosine 245, and lysine 260. 141 to 143 (QTG) contributes to the hydrogencarbonate binding site.

Belongs to the enoyl-CoA hydratase/isomerase family. MenB subfamily. Hydrogencarbonate is required as a cofactor.

The enzyme catalyses 2-succinylbenzoyl-CoA + H(+) = 1,4-dihydroxy-2-naphthoyl-CoA + H2O. It functions in the pathway quinol/quinone metabolism; 1,4-dihydroxy-2-naphthoate biosynthesis; 1,4-dihydroxy-2-naphthoate from chorismate: step 6/7. Its pathway is quinol/quinone metabolism; menaquinone biosynthesis. Converts o-succinylbenzoyl-CoA (OSB-CoA) to 1,4-dihydroxy-2-naphthoyl-CoA (DHNA-CoA). This chain is 1,4-dihydroxy-2-naphthoyl-CoA synthase, found in Staphylococcus epidermidis (strain ATCC 12228 / FDA PCI 1200).